Consider the following 675-residue polypeptide: uncharacterized protein (675 aa).

The next 4 membrane-spanning stretches (helical) occupy residues Gln-2–Phe-22, Leu-397–Ala-417, Leu-448–Tyr-468, and Ile-481–Ala-501. Disordered regions lie at residues Tyr-616–Asp-635 and Gln-646–Asp-675. The span at Val-665 to Asp-675 shows a compositional bias: acidic residues. Ser-669 carries the post-translational modification Phosphoserine.

Belongs to the 1-acyl-sn-glycerol-3-phosphate acyltransferase family.

It localises to the endoplasmic reticulum membrane. This is an uncharacterized protein from Schizosaccharomyces pombe (strain 972 / ATCC 24843) (Fission yeast).